Here is a 504-residue protein sequence, read N- to C-terminus: MLSTTQSVTEPTEVTSKKVEDIEKENDEETPYSIFTSYDRLVLIVILSLIGFWSTISSPIYFPALPTLTSYFHTSSSIMNISVVAYLIFQGIAPTISSNLADTFGRRPVILASIIVFCASCVAISQTNVYWLLAVLRCIQAAGIAAVISISSGVAGDVCTRANRGSMVGAVAGLQLVGNGIGGLVGAALISSFNSWRSIFIFLTIGGGVTFILAIFILPETSRKLVGNGSVVPKNILNKSPYIYLPHFKKRMNNDITTIVPATRFDLLGPLKIFFQKNVFCTLLPVGIHFAAWTMVLTSLSTELESRYHYSVMHVGLIYLPQGIACIAGSLVVGKSLDWYYRYRKTIYDQEVECLPLDERPQFNIVATRLTLSVVPALLMIIGLVIFGWCIQYKRHIISIIISTILVSFSASVFIAICTTMLVDLYPNNGSGSTSCLNLMRCWLAALGAGVLDSMINAMNVGGTYTVVAGFCILFDLALIYVLHNAKKKFSNSGPTTTKSPPKQ.

Residues 1–14 (MLSTTQSVTEPTEV) show a composition bias toward polar residues. The segment at 1 to 23 (MLSTTQSVTEPTEVTSKKVEDIE) is disordered. The Cytoplasmic segment spans residues 1–41 (MLSTTQSVTEPTEVTSKKVEDIEKENDEETPYSIFTSYDRL). The helical transmembrane segment at 42–62 (VLIVILSLIGFWSTISSPIYF) threads the bilayer. Residues 63–75 (PALPTLTSYFHTS) are Extracellular-facing. The helical transmembrane segment at 76 to 96 (SSIMNISVVAYLIFQGIAPTI) threads the bilayer. The Cytoplasmic segment spans residues 97 to 106 (SSNLADTFGR). A helical membrane pass occupies residues 107–129 (RPVILASIIVFCASCVAISQTNV). At 130–132 (YWL) the chain is on the extracellular side. The chain crosses the membrane as a helical span at residues 133-155 (LAVLRCIQAAGIAAVISISSGVA). Residues 156–169 (GDVCTRANRGSMVG) lie on the Cytoplasmic side of the membrane. Residues 170–190 (AVAGLQLVGNGIGGLVGAALI) traverse the membrane as a helical segment. Over 191-198 (SSFNSWRS) the chain is Extracellular. The chain crosses the membrane as a helical span at residues 199–219 (IFIFLTIGGGVTFILAIFILP). The Cytoplasmic portion of the chain corresponds to 220 to 278 (ETSRKLVGNGSVVPKNILNKSPYIYLPHFKKRMNNDITTIVPATRFDLLGPLKIFFQKN). The chain crosses the membrane as a helical span at residues 279-299 (VFCTLLPVGIHFAAWTMVLTS). Residues 300 to 311 (LSTELESRYHYS) lie on the Extracellular side of the membrane. Residues 312–332 (VMHVGLIYLPQGIACIAGSLV) traverse the membrane as a helical segment. At 333-370 (VGKSLDWYYRYRKTIYDQEVECLPLDERPQFNIVATRL) the chain is on the cytoplasmic side. The helical transmembrane segment at 371 to 391 (TLSVVPALLMIIGLVIFGWCI) threads the bilayer. Over 392–396 (QYKRH) the chain is Extracellular. Residues 397–417 (IISIIISTILVSFSASVFIAI) form a helical membrane-spanning segment. Topologically, residues 418–438 (CTTMLVDLYPNNGSGSTSCLN) are cytoplasmic. The helical transmembrane segment at 439–456 (LMRCWLAALGAGVLDSMI) threads the bilayer. Topologically, residues 457–460 (NAMN) are extracellular. A helical membrane pass occupies residues 461-483 (VGGTYTVVAGFCILFDLALIYVL). The Cytoplasmic portion of the chain corresponds to 484-504 (HNAKKKFSNSGPTTTKSPPKQ).

This sequence belongs to the major facilitator superfamily. CAR1 family.

It is found in the cell membrane. MFS antiporter that does not display functional linkage as drug transporter and performs functions that significantly affect biofilm development and virulence. No substrate for transport has been identified yet, but plays an important role in the growth in the host. The chain is MFS antiporter QDR2 (QDR2) from Candida albicans (strain SC5314 / ATCC MYA-2876) (Yeast).